Consider the following 288-residue polypeptide: Acetyl-coenzyme A carboxylase carboxyl transferase subunit beta (288 aa).

The region spanning 34-288 (LFAKCPACKH…HLVAFHGGGQ (255 aa)) is the CoA carboxyltransferase N-terminal domain. Positions 38, 41, 56, and 59 each coordinate Zn(2+). The C4-type zinc finger occupies 38–59 (CPACKHMIYKKDLGLAKICPTC).

Belongs to the AccD/PCCB family. In terms of assembly, acetyl-CoA carboxylase is a heterohexamer composed of biotin carboxyl carrier protein (AccB), biotin carboxylase (AccC) and two subunits each of ACCase subunit alpha (AccA) and ACCase subunit beta (AccD). Zn(2+) serves as cofactor.

It is found in the cytoplasm. It carries out the reaction N(6)-carboxybiotinyl-L-lysyl-[protein] + acetyl-CoA = N(6)-biotinyl-L-lysyl-[protein] + malonyl-CoA. The protein operates within lipid metabolism; malonyl-CoA biosynthesis; malonyl-CoA from acetyl-CoA: step 1/1. In terms of biological role, component of the acetyl coenzyme A carboxylase (ACC) complex. Biotin carboxylase (BC) catalyzes the carboxylation of biotin on its carrier protein (BCCP) and then the CO(2) group is transferred by the transcarboxylase to acetyl-CoA to form malonyl-CoA. This chain is Acetyl-coenzyme A carboxylase carboxyl transferase subunit beta, found in Streptococcus pyogenes serotype M1.